The primary structure comprises 310 residues: MEKLAASTVTDLACVTAINSSPPPLSPISEQSFNNKHQEEFAASFASLYNSIFSPESLSPSPPSSSSPPSRVDTTTEHRLLQAKLILEYDELNEHYELCLNRLQSLMTELDSLRHENDSLRFENSDLLKLIRISTSSSSSVSPPAPIHNRQFRHQISDSRSAKRNNQERNSLPKSISVRSQGYLKINHGFEASDLQTSQLSSNSVSSSQKVCVVQTKGEREALELEVYRQGMMKTELCNKWQETGACCYGDNCQFAHGIDELRPVIRHPRYKTEVCRMMVTGAMCPYGHRCHFRHSLTDQERMMMMMLTR.

Positions 56 to 75 (ESLSPSPPSSSSPPSRVDTT) are disordered. The stretch at 84–129 (KLILEYDELNEHYELCLNRLQSLMTELDSLRHENDSLRFENSDLLK) forms a coiled coil. Residues 155–167 (QISDSRSAKRNNQ) show a composition bias toward basic and acidic residues. Positions 155–174 (QISDSRSAKRNNQERNSLPK) are disordered. 2 C3H1-type zinc fingers span residues 232–260 (MMKTELCNKWQETGACCYGDNCQFAHGID) and 270–298 (RYKTEVCRMMVTGAMCPYGHRCHFRHSLT).

Highly expressed in secondary cell wall-forming tissues and the xylem cells of roots. Expressed predominantly in inflorescence stems, flowers and siliques. Highly expressed in the basal portion of stems, where cells are undergoing secondary cell wall thickening.

In terms of biological role, functions probably as a transcriptional factor that activates genes involved in secondary cell wall biosynthesis. May play a role in both transcriptional and post-transcriptional regulation. Binds to ssDNA, dsDNA, and ribohomopolymers in vitro. Maybe involved in post-transcriptional regulation of its target genes. Targets RNA of a polygalacturonase, a well-known cell wall modifying gene. Functions redudantly with C3H15 to regulate secondary cell wall formation. C3H14 and C3H15 have overlapping roles in the regulation of secondary cell wall formation and anther development. C3H14 may contribute more to secondary cell wall thickening while C3H15 could be more important in anther development. May regulate at both the transcriptional and post-transcriptional levels the expression of many genes involved in various biological processes, particularly those associated with cell wall metabolism and pollen development. The chain is Zinc finger CCCH domain-containing protein 14 from Arabidopsis thaliana (Mouse-ear cress).